The primary structure comprises 517 residues: GMP synthase [glutamine-hydrolyzing] (517 aa).

Positions 11 to 202 constitute a Glutamine amidotransferase type-1 domain; that stretch reads KIIVLDYGSQ…AFGVCGAQDN (192 aa). Catalysis depends on C88, which acts as the Nucleophile. Active-site residues include H176 and E178. The 190-residue stretch at 203–392 folds into the GMPS ATP-PPase domain; the sequence is WTMNDFIDMQ…LGMPYELVWR (190 aa). ATP is bound at residue 230 to 236; sequence SGGVDSS.

Homodimer.

The catalysed reaction is XMP + L-glutamine + ATP + H2O = GMP + L-glutamate + AMP + diphosphate + 2 H(+). Its pathway is purine metabolism; GMP biosynthesis; GMP from XMP (L-Gln route): step 1/1. Functionally, catalyzes the synthesis of GMP from XMP. This Latilactobacillus sakei subsp. sakei (strain 23K) (Lactobacillus sakei subsp. sakei) protein is GMP synthase [glutamine-hydrolyzing].